A 189-amino-acid polypeptide reads, in one-letter code: Large ribosomal subunit protein uL5c (189 aa).

This sequence belongs to the universal ribosomal protein uL5 family. In terms of assembly, part of the 50S ribosomal subunit; contacts the 5S rRNA.

The protein resides in the plastid. Its subcellular location is the chloroplast. Functionally, binds 5S rRNA, forms part of the central protuberance of the 50S subunit. The protein is Large ribosomal subunit protein uL5c (rpl5) of Chara vulgaris (Common stonewort).